The sequence spans 858 residues: Putative glutamate--cysteine ligase 2-3 (858 aa).

The interval 1 to 372 is carboxylate-amine ligase; the sequence is MSDARNVAVG…RDVPPAGASL (372 aa). The tract at residues 373-858 is unknown; it reads GVAPAVSAPD…GSKDTWIPRR (486 aa).

In the N-terminal section; belongs to the glutamate--cysteine ligase type 2 family. YbdK subfamily.

The catalysed reaction is L-cysteine + L-glutamate + ATP = gamma-L-glutamyl-L-cysteine + ADP + phosphate + H(+). In terms of biological role, ATP-dependent carboxylate-amine ligase which exhibits weak glutamate--cysteine ligase activity. This Frankia alni (strain DSM 45986 / CECT 9034 / ACN14a) protein is Putative glutamate--cysteine ligase 2-3.